A 252-amino-acid polypeptide reads, in one-letter code: Phosphoglycolate phosphatase (252 aa).

Catalysis depends on Asp-13, which acts as the Nucleophile. Mg(2+)-binding residues include Asp-13, Asp-15, and Asp-192.

The protein belongs to the HAD-like hydrolase superfamily. CbbY/CbbZ/Gph/YieH family. In terms of assembly, monomer. Mg(2+) serves as cofactor. It depends on chloride as a cofactor.

The catalysed reaction is 2-phosphoglycolate + H2O = glycolate + phosphate. The protein operates within organic acid metabolism; glycolate biosynthesis; glycolate from 2-phosphoglycolate: step 1/1. In terms of biological role, specifically catalyzes the dephosphorylation of 2-phosphoglycolate. Is involved in the dissimilation of the intracellular 2-phosphoglycolate formed during the DNA repair of 3'-phosphoglycolate ends, a major class of DNA lesions induced by oxidative stress. The chain is Phosphoglycolate phosphatase from Salmonella typhimurium (strain LT2 / SGSC1412 / ATCC 700720).